Reading from the N-terminus, the 694-residue chain is Transcription activator of gluconeogenesis Pc22g08580 (694 aa).

A disordered region spans residues 1-61; the sequence is MNMETKNGSP…DPSRPRRKKA (61 aa). The segment covering 17-55 has biased composition (basic and acidic residues); that stretch reads SGERDSADITEHEQMDVKPKTNGDSKADRKAANAKDPSR. The zn(2)-C6 fungal-type DNA-binding region spans 65 to 93; the sequence is CFACQRAHLTCGDERPCQRCIKRGLQDAC. 3 disordered regions span residues 126–240, 276–300, and 552–582; these read TLRN…GPFF, AAGD…AQFS, and TGGS…GTGR. Polar residues predominate over residues 132-141; sequence PISRNGTNAV. Low complexity predominate over residues 142-171; sequence NSNQQHSQQHPQQPTNPTNNNFYPTPQTQT. 3 stretches are compositionally biased toward polar residues: residues 172-234, 281-300, and 552-581; these read GSYN…SQNP, PTDS…AQFS, and TGGS…SGTG.

It belongs to the ERT1/acuK family.

It is found in the nucleus. In terms of biological role, transcription factor which regulates nonfermentable carbon utilization. Activator of gluconeogenetic genes. The polypeptide is Transcription activator of gluconeogenesis Pc22g08580 (Penicillium rubens (strain ATCC 28089 / DSM 1075 / NRRL 1951 / Wisconsin 54-1255) (Penicillium chrysogenum)).